A 297-amino-acid chain; its full sequence is Probable deoxyhypusine synthase (297 aa).

Catalysis depends on Lys265, which acts as the Nucleophile.

The protein belongs to the deoxyhypusine synthase family. NAD(+) is required as a cofactor.

The catalysed reaction is [eIF5A protein]-L-lysine + spermidine = [eIF5A protein]-deoxyhypusine + propane-1,3-diamine. Its pathway is protein modification; eIF5A hypusination. In terms of biological role, catalyzes the NAD-dependent oxidative cleavage of spermidine and the subsequent transfer of the butylamine moiety of spermidine to the epsilon-amino group of a specific lysine residue of the eIF-5A precursor protein to form the intermediate deoxyhypusine residue. This Methanopyrus kandleri (strain AV19 / DSM 6324 / JCM 9639 / NBRC 100938) protein is Probable deoxyhypusine synthase.